Here is a 257-residue protein sequence, read N- to C-terminus: Snake venom serine protease 3 (257 aa).

The signal sequence occupies residues 1-18 (MVLIRVLANLLILQLSYA). The propeptide occupies 19 to 24 (QKSSEL). Positions 25 to 248 (VIGGDECNIN…YTDWIQNIIA (224 aa)) constitute a Peptidase S1 domain. 6 disulfide bridges follow: C31–C163, C50–C66, C98–C255, C142–C209, C174–C188, and C199–C224. N44 carries N-linked (GlcNAc...) asparagine glycosylation. The active-site Charge relay system is the H65. N-linked (GlcNAc...) asparagine glycosylation is present at N103. D110 acts as the Charge relay system in catalysis. Residues N117 and N154 are each glycosylated (N-linked (GlcNAc...) asparagine). S203 acts as the Charge relay system in catalysis. N250 carries N-linked (GlcNAc...) asparagine glycosylation.

It belongs to the peptidase S1 family. Snake venom subfamily. Monomer. In terms of tissue distribution, expressed by the venom gland.

Its subcellular location is the secreted. In terms of biological role, snake venom serine protease that may act in the hemostasis system of the prey. In Protobothrops flavoviridis (Habu), this protein is Snake venom serine protease 3 (TLF3).